The primary structure comprises 994 residues: Leucine-rich repeat receptor-like kinase protein FLORAL ORGAN NUMBER1 (994 aa).

An N-terminal signal peptide occupies residues 1–17; the sequence is MPPTLLLLLLLLPPSLA. LRR repeat units lie at residues 73-93, 94-117, 118-141, 147-171, 172-194, 195-219, 244-268, 269-292, 293-316, 318-340, 341-364, 365-388, 390-412, 413-436, 438-459, 460-483, 484-507, 509-531, 533-555, 556-579, and 581-604; these read AINL…IALL, DSLA…LPTL, PSLR…DSGG, FPSL…SASH, ARLR…SYGD, LAAL…LSRL, LGAL…LGRL, QRLD…LGDL, SSLA…LANL, NLKL…VAGF, AQLE…LGKN, GRLK…LCAG, RLEM…LGDC, KTLT…LFNL, QANM…VIGG, DKIG…IGNL, PALQ…IGNL, NLSR…LIRC, SLAA…ITSL, KILC…MSNM, and SLTT…QFLV. N75, N98, N124, N129, and N159 each carry an N-linked (GlcNAc...) asparagine glycan. N-linked (GlcNAc...) asparagine glycosylation is present at N256. N315 carries an N-linked (GlcNAc...) asparagine glycan. An N-linked (GlcNAc...) asparagine glycan is attached at N352. N495, N509, and N514 each carry an N-linked (GlcNAc...) asparagine glycan. N-linked (GlcNAc...) asparagine glycans are attached at residues N562 and N578. The N-linked (GlcNAc...) asparagine glycan is linked to N606. The chain crosses the membrane as a helical span at residues 647–667; that stretch reads KKMLVALVAAFAAVAVAFLGA. In terms of domain architecture, Protein kinase spans 704–978; sequence VKEDNIIGKG…TMREVVHMLS (275 aa). ATP is bound by residues 710-718 and K731; that span reads IGKGGAGIV. D828 acts as the Proton acceptor in catalysis.

The protein belongs to the protein kinase superfamily. Ser/Thr protein kinase family. Expressed in shoot apical meristem, and after transition to the reproductive phase, detected in the inflorescence and the floral meristems. Expressed uniformly throughout the meristems. Expressed also in floral organ primordia, such as the palea, lemma, lodicules, stamens, carpels and ovules.

It is found in the membrane. The enzyme catalyses L-seryl-[protein] + ATP = O-phospho-L-seryl-[protein] + ADP + H(+). It catalyses the reaction L-threonyl-[protein] + ATP = O-phospho-L-threonyl-[protein] + ADP + H(+). Functionally, receptor-like kinase protein that regulates the size of the floral meristem. This chain is Leucine-rich repeat receptor-like kinase protein FLORAL ORGAN NUMBER1 (FON1), found in Oryza sativa subsp. japonica (Rice).